The following is a 430-amino-acid chain: BSD domain-containing protein 1 (430 aa).

2 positions are modified to phosphoserine: Ser92 and Ser166. The region spanning 146 to 198 (WLSQFCLEEKKGEISELLVGSPSIRALYTKMVPAAVSHSEFWHRYFYKVHQLE) is the BSD domain. Disordered regions lie at residues 247-298 (STFP…APEA) and 319-398 (LAVD…WEKD). Polar residues predominate over residues 276-291 (PSESSESISLVTQIAN). The segment covering 350–367 (PPARVETLREEAPTDLRV) has biased composition (basic and acidic residues). Residue Thr356 is modified to Phosphothreonine. A compositionally biased stretch (polar residues) spans 371–390 (NSDSGKSTPSNNGKKGSSTD). Residues Ser387, Ser388, and Ser418 each carry the phosphoserine modification.

The protein is BSD domain-containing protein 1 (BSDC1) of Homo sapiens (Human).